We begin with the raw amino-acid sequence, 35 residues long: Kappa-theraphotoxin-Tb1c (35 aa).

Cystine bridges form between Cys3–Cys18, Cys10–Cys23, and Cys17–Cys30.

The protein belongs to the neurotoxin 10 (Hwtx-1) family. 59 (Tltx) subfamily. In terms of assembly, monomer. In terms of tissue distribution, expressed by the venom gland.

The protein resides in the secreted. Blocks Kv4.2/KCND2 voltage-gated potassium channels probably by shifting the voltage-dependence of channel activation to more depolarized potentials and by binding to the S3-S4 linker region of the voltage sensor domain. This is Kappa-theraphotoxin-Tb1c from Theraphosa blondi (Goliath birdeating spider).